The chain runs to 586 residues: MSAGDAVCTGWLVKSPPERKLQRYAWRKRWFVLRRGRMSGNPDVLEYYRNKHSSKPIRVIDLSECAVWKHVGPSFVRKEFQNNFVFIVKTTSRTFYLVAKTEQEMQVWVHSISQVCNLGHLEDGADSMESLSYTPSSLQPSSASSLLTAHAASSSLPRDDPNTNAVATEETRSESELLFLPDYLVLSNCETGRLHHTSLPTRCDSWSNSDRSLEQASFDDVFVDCLQPLPSSHLVHPSCHGSGAQEVPSSRPQAALIWSREINGPPRDHLSSSPLLESSLSSTIQVDKNQGSLPCGAKELDIMSNTPPPRPPKPSHLSERRQEEWSTHSGSKKPECTLVPRRISLSGLDNMRTWKADVEGQSLRHRDKRLSLNLPCRFSPMYPTASASIEDSYVPMSPQAGASGLGPHCSPDDYIPMNSGSISSPLPELPANLEPPPVNRDLKPQRKSRPPPLDLRNLSIIREHASLTRTRTVPCSRTSFLSPERNGINSARFFANPVSREDEESYIEMEEHRTASSLSSGALTWTKKFSLDYLALDFNSASPAPMQQKLLLSEEQRVDYVQVDEQKTQALQSTKQEWTDERQSKV.

The 113-residue stretch at 5–117 (DAVCTGWLVK…WVHSISQVCN (113 aa)) folds into the PH domain. 2 disordered regions span residues 149 to 171 (AHAA…TEET) and 281 to 335 (SSTI…KKPE). Residues 283 to 292 (TIQVDKNQGS) are compositionally biased toward polar residues. Over residues 316-326 (HLSERRQEEWS) the composition is skewed to basic and acidic residues. Ser344 is modified (phosphoserine). The disordered stretch occupies residues 401 to 453 (GASGLGPHCSPDDYIPMNSGSISSPLPELPANLEPPPVNRDLKPQRKSRPPPL). Ser482 carries the phosphoserine modification.

Belongs to the GAB family. Interacts with PIK3R/p85, SHP2 and GRAP2/MONA. May interact with Grb2. In terms of processing, phosphorylated on tyrosine residue(s) after macrophage colony-stimulating factor (M-CSF) receptor stimulation.

This chain is GRB2-associated-binding protein 3 (GAB3), found in Homo sapiens (Human).